The chain runs to 145 residues: Photosystem I reaction center subunit XI (145 aa).

The next 3 helical transmembrane spans lie at 48–68 (LEIG…LGPL), 75–95 (LLVG…GLTI), and 125–145 (IGAF…SFFA).

It belongs to the PsaL family.

The protein resides in the plastid. It is found in the chloroplast thylakoid membrane. The polypeptide is Photosystem I reaction center subunit XI (Emiliania huxleyi (Coccolithophore)).